The chain runs to 520 residues: GMP synthase [glutamine-hydrolyzing] (520 aa).

One can recognise a Glutamine amidotransferase type-1 domain in the interval 9–202 (RVLIVDFGSQ…LFNIAGLKGD (194 aa)). Cysteine 86 (nucleophile) is an active-site residue. Active-site residues include histidine 176 and glutamate 178. Residues 203-395 (WTMAAFRQEM…LGLAPAFVGR (193 aa)) enclose the GMPS ATP-PPase domain. 230–236 (SGGVDSS) contacts ATP.

In terms of assembly, homodimer.

It carries out the reaction XMP + L-glutamine + ATP + H2O = GMP + L-glutamate + AMP + diphosphate + 2 H(+). It functions in the pathway purine metabolism; GMP biosynthesis; GMP from XMP (L-Gln route): step 1/1. Its function is as follows. Catalyzes the synthesis of GMP from XMP. The polypeptide is GMP synthase [glutamine-hydrolyzing] (Caulobacter vibrioides (strain ATCC 19089 / CIP 103742 / CB 15) (Caulobacter crescentus)).